Consider the following 1476-residue polypeptide: ABC-type transporter frbG (1476 aa).

5 helical membrane-spanning segments follow: residues 26 to 46 (LLFE…VLAL), 64 to 84 (LYYA…VQLI), 97 to 117 (SIAI…LCHL), 122 to 142 (SAKP…FDII), and 146 to 166 (TLWI…GLVL). N244 carries an N-linked (GlcNAc...) asparagine glycan. 4 consecutive transmembrane segments (helical) span residues 266–286 (FLAG…QPFL), 302–322 (AGAT…GIAI), 380–400 (LQTM…TWLL), and 409–429 (IPSV…AVMA). Residues 274–553 (LALTGFTFAQ…FVHSAVNLML (280 aa)) form the ABC transmembrane type-1 1 domain. A glycan (N-linked (GlcNAc...) asparagine) is linked at N464. 2 helical membrane passes run 487-507 (CLVF…IIGF) and 533-553 (IFAL…NLML). Residues 619-845 (IQARDTNIGW…VTAHVHNQTS (227 aa)) form the ABC transporter 1 domain. Position 652 to 659 (652 to 659 (GPTNSGKS)) interacts with ATP. N-linked (GlcNAc...) asparagine glycosylation is found at N694, N776, N805, and N842. 5 helical membrane passes run 898 to 918 (AVFL…SIWV), 936 to 956 (YLLV…GGGS), 1017 to 1037 (LFAF…SPFV), 1121 to 1141 (LGLV…IVIV), and 1151 to 1171 (GFLG…GGFI). Positions 898-1179 (AVFLALCMAL…FIGGWTGLET (282 aa)) constitute an ABC transmembrane type-1 2 domain. An ABC transporter 2 domain is found at 1216–1447 (IVFDDVTASY…LSSSSPTSSP (232 aa)). N1235 carries an N-linked (GlcNAc...) asparagine glycan. 1250–1257 (GRTGSGKS) provides a ligand contact to ATP.

Belongs to the ABC transporter superfamily. ABCC family. Conjugate transporter (TC 3.A.1.208) subfamily.

Its subcellular location is the cell membrane. Functionally, ABC-type transporter; part of the gene cluster that mediates the biosynthesis of the antifungal antibiotic FR901469, an inhibitor of beta-1,3-glucansynthase, exerting antifungal activity against the pathogenes Candida albicans and Aspergillus fumigatus. FR901469 is a cyclic depsipeptide containing 12 amino acid residues and a fatty acid chain. Probably involved in the secretion of FR901469. In Dothideomycetidae sp. (strain 11243) (Fungal sp. (strain No.11243)), this protein is ABC-type transporter frbG.